The following is a 298-amino-acid chain: Lipoyl synthase (298 aa).

[4Fe-4S] cluster-binding residues include Cys-43, Cys-48, Cys-54, Cys-69, Cys-73, Cys-76, and Ser-280. Positions 55–269 (FSSGTATFLI…AACGRGMGIP (215 aa)) constitute a Radical SAM core domain.

Belongs to the radical SAM superfamily. Lipoyl synthase family. It depends on [4Fe-4S] cluster as a cofactor.

It is found in the cytoplasm. The enzyme catalyses [[Fe-S] cluster scaffold protein carrying a second [4Fe-4S](2+) cluster] + N(6)-octanoyl-L-lysyl-[protein] + 2 oxidized [2Fe-2S]-[ferredoxin] + 2 S-adenosyl-L-methionine + 4 H(+) = [[Fe-S] cluster scaffold protein] + N(6)-[(R)-dihydrolipoyl]-L-lysyl-[protein] + 4 Fe(3+) + 2 hydrogen sulfide + 2 5'-deoxyadenosine + 2 L-methionine + 2 reduced [2Fe-2S]-[ferredoxin]. It functions in the pathway protein modification; protein lipoylation via endogenous pathway; protein N(6)-(lipoyl)lysine from octanoyl-[acyl-carrier-protein]: step 2/2. Its function is as follows. Catalyzes the radical-mediated insertion of two sulfur atoms into the C-6 and C-8 positions of the octanoyl moiety bound to the lipoyl domains of lipoate-dependent enzymes, thereby converting the octanoylated domains into lipoylated derivatives. The protein is Lipoyl synthase of Nitratidesulfovibrio vulgaris (strain ATCC 29579 / DSM 644 / CCUG 34227 / NCIMB 8303 / VKM B-1760 / Hildenborough) (Desulfovibrio vulgaris).